A 61-amino-acid chain; its full sequence is Small ribosomal subunit protein uS14B (61 aa).

4 residues coordinate Zn(2+): cysteine 24, cysteine 27, cysteine 40, and cysteine 43.

The protein belongs to the universal ribosomal protein uS14 family. Zinc-binding uS14 subfamily. As to quaternary structure, part of the 30S ribosomal subunit. Contacts proteins S3 and S10. Zn(2+) is required as a cofactor.

Binds 16S rRNA, required for the assembly of 30S particles and may also be responsible for determining the conformation of the 16S rRNA at the A site. The sequence is that of Small ribosomal subunit protein uS14B from Bacillus licheniformis (strain ATCC 14580 / DSM 13 / JCM 2505 / CCUG 7422 / NBRC 12200 / NCIMB 9375 / NCTC 10341 / NRRL NRS-1264 / Gibson 46).